Here is a 294-residue protein sequence, read N- to C-terminus: MNRMSEKQIQNSLFEYKFIDFNGPLDTLCVLIKQKRLDINNLDILELSKQYVNFVNQLIKTIDIDILGDHLAMASYLLELKTRMLMPTVDEKQIMSIEEDRQNLIDRLIEYNGYKNLSEHLKQRFEFRATMMDLPQQDYEQFYLKDAIYKPLPNHLDSMILKNIMDKIIYENELKNYKINKIKVHEYDVKQLEQLLLNYLKQSPNQQASMLSFFDIQAVIDKNKRFFAIMFLIILILINRNEILFEELDNDYLLKINIERVVDDYNSSSVEQAKNLTSNLTKDTIINFKGEDNE.

Belongs to the ScpA family. As to quaternary structure, component of a cohesin-like complex composed of ScpA, ScpB and the Smc homodimer, in which ScpA and ScpB bind to the head domain of Smc. The presence of the three proteins is required for the association of the complex with DNA.

Its subcellular location is the cytoplasm. Its function is as follows. Participates in chromosomal partition during cell division. May act via the formation of a condensin-like complex containing Smc and ScpB that pull DNA away from mid-cell into both cell halves. In Ureaplasma parvum serovar 3 (strain ATCC 700970), this protein is Segregation and condensation protein A.